The sequence spans 321 residues: Torsin-2A (321 aa).

A signal peptide spans 1-26; that stretch reads MAVARHGYRPWGSILGLLGLALAAAA. 93 to 100 provides a ligand contact to ATP; it reads GWTGTGKS. An N-linked (GlcNAc...) asparagine glycan is attached at Asn-149.

The protein belongs to the ClpA/ClpB family. Torsin subfamily. As to quaternary structure, homohexamer. Interacts with TOR1AIP1. Post-translationally, N-glycosylated. In terms of tissue distribution, expressed at similar levels in liver, muscle and brain (at protein level).

The protein localises to the endoplasmic reticulum lumen. In Mus musculus (Mouse), this protein is Torsin-2A (Tor2a).